A 138-amino-acid chain; its full sequence is Flavodoxin (138 aa).

Residues 1–136 form the Flavodoxin-like domain; sequence MKIVYWSGTG…DCIEFGKKIA (136 aa).

Belongs to the flavodoxin family. It depends on FMN as a cofactor.

Functionally, low-potential electron donor to a number of redox enzymes. This Clostridium beijerinckii (Clostridium MP) protein is Flavodoxin.